Here is a 496-residue protein sequence, read N- to C-terminus: Cytochrome P450 3A56 (496 aa).

Residue Cys441 coordinates heme.

It belongs to the cytochrome P450 family. Requires heme as cofactor. In terms of tissue distribution, highly expressed in liver and intestine. Moderate expression in gill and spleen. Low expression in kidney, brain and heart.

The protein resides in the endoplasmic reticulum membrane. It is found in the microsome membrane. The enzyme catalyses an organic molecule + reduced [NADPH--hemoprotein reductase] + O2 = an alcohol + oxidized [NADPH--hemoprotein reductase] + H2O + H(+). Its function is as follows. Putative steroid 6-beta-hydroxylase. The sequence is that of Cytochrome P450 3A56 (cyp3a56) from Fundulus heteroclitus (Killifish).